Here is a 659-residue protein sequence, read N- to C-terminus: MTVYLPDGKPLELPEGATAKDVARALGEGWERRAVGAIVDGELYDLLKPLPQGAKVRLLTEKDPEFQTLFRHTLAHVLAQAVKEFFREKGYDPESVRLGVGPVIEKGFYYDIEAPEPLSDEDLPAIEAKMREILKRDLPLRRFVLSREEALARYRGKDPYKTELILEIPEGEEISFYQQGDEAYGFTDLCRGPHVPSTGRIPPHFKLTHVAGAYWRGDENRPMLQRVYGVAFRTAEELKEYLWQLEEAKKRDHRRLGRELELFLIDPMVGKGLVLWLPKGNVVREELMAFMREEQVRRGYQLVTTPHIGSLELYKTSGHYPYYAESQFPPISFKERGEEEEYLLKPMNCPHHIRIYAYRKRSYRELPLRLAEFGTVYRYEKAGELLGLTRVRGFTQDDAHIFCTPEEVKGEFLGVLDLVLKVFATLGLKDYRARIGVRDPKSDKYVGDEAKWALAERQIEEAAAEAGLRYTVEEGDAAFYGPKLDFVVKDALGREWQLGTIQVDYNLPERFGLTYVGKDGEEHRPVMLHRAPFGSLERFIGILIEHFAGDFPLWLAPVQAVVVPVSEKQEGYAREVAGRLKEAGLRAEADTRPERMQARIRDAEVQKVPYVLVVGEREKAEGAVSVRRRKKGNLGTMPLAAFLEGALREYRERRLEPVF.

Residues 1–60 (MTVYLPDGKPLELPEGATAKDVARALGEGWERRAVGAIVDGELYDLLKPLPQGAKVRLLT) form the TGS domain. Positions 252-552 (DHRRLGRELE…LIEHFAGDFP (301 aa)) are catalytic. The Zn(2+) site is built by Cys349, His400, and His529.

Belongs to the class-II aminoacyl-tRNA synthetase family. As to quaternary structure, homodimer. Zn(2+) is required as a cofactor.

Its subcellular location is the cytoplasm. It carries out the reaction tRNA(Thr) + L-threonine + ATP = L-threonyl-tRNA(Thr) + AMP + diphosphate + H(+). In terms of biological role, catalyzes the attachment of threonine to tRNA(Thr) in a two-step reaction: L-threonine is first activated by ATP to form Thr-AMP and then transferred to the acceptor end of tRNA(Thr). Also edits incorrectly charged L-seryl-tRNA(Thr). The sequence is that of Threonine--tRNA ligase from Thermus thermophilus (strain ATCC BAA-163 / DSM 7039 / HB27).